The sequence spans 296 residues: D-alanine--D-alanine ligase (296 aa).

Residues 103-293 (KEILMHHRMP…FDSFVKRIIE (191 aa)) enclose the ATP-grasp domain. 129–180 (ISFPVAVKPSSGGSSIATFKVKSIQELKHAYEEASKYGEVMIEQWVTGKEIT) is an ATP binding site. Residues Asp247, Glu260, and Asn262 each coordinate Mg(2+).

The protein belongs to the D-alanine--D-alanine ligase family. The cofactor is Mg(2+). Mn(2+) serves as cofactor.

The protein resides in the cytoplasm. The enzyme catalyses 2 D-alanine + ATP = D-alanyl-D-alanine + ADP + phosphate + H(+). It functions in the pathway cell wall biogenesis; peptidoglycan biosynthesis. Cell wall formation. This Francisella tularensis subsp. tularensis (strain FSC 198) protein is D-alanine--D-alanine ligase.